Here is a 248-residue protein sequence, read N- to C-terminus: Small ribosomal subunit protein uS3 (248 aa).

Residues 38 to 106 (IREFLSEGLE…QVQLNILEVK (69 aa)) enclose the KH type-2 domain. Residues 214 to 229 (SLMNARDERPSRGGRR) are compositionally biased toward basic and acidic residues. Positions 214–248 (SLMNARDERPSRGGRRERPRRGGARRQRAEKKQEG) are disordered. The span at 230–242 (ERPRRGGARRQRA) shows a compositional bias: basic residues.

This sequence belongs to the universal ribosomal protein uS3 family. As to quaternary structure, part of the 30S ribosomal subunit. Forms a tight complex with proteins S10 and S14.

Functionally, binds the lower part of the 30S subunit head. Binds mRNA in the 70S ribosome, positioning it for translation. In Corynebacterium urealyticum (strain ATCC 43042 / DSM 7109), this protein is Small ribosomal subunit protein uS3.